We begin with the raw amino-acid sequence, 65 residues long: Large ribosomal subunit protein bL35 (65 aa).

The protein belongs to the bacterial ribosomal protein bL35 family.

This chain is Large ribosomal subunit protein bL35, found in Sorangium cellulosum (strain So ce56) (Polyangium cellulosum (strain So ce56)).